Consider the following 477-residue polypeptide: Serine/threonine-protein kinase prp4 (477 aa).

Positions 25–123 (KYQQTGNGHS…SPSVKRQNTG (99 aa)) are disordered. A compositionally biased stretch (basic and acidic residues) spans 38-47 (IPEKKLKEDV). Residues 74–86 (EGSNSNTKLDVTN) show a composition bias toward polar residues. The span at 87-98 (STTSDSPSIKSS) shows a compositional bias: low complexity. S92 carries the phosphoserine modification. A compositionally biased stretch (polar residues) spans 113-123 (PSPSVKRQNTG). In terms of domain architecture, Protein kinase spans 159-477 (YIVQSNLGKG…ALKHPFFIKK (319 aa)). ATP-binding positions include 165-173 (LGKGMFSTV) and K188. Catalysis depends on D286, which acts as the Proton acceptor. Y320 is subject to Phosphotyrosine.

This sequence belongs to the protein kinase superfamily. CMGC Ser/Thr protein kinase family.

It carries out the reaction L-seryl-[protein] + ATP = O-phospho-L-seryl-[protein] + ADP + H(+). The catalysed reaction is L-threonyl-[protein] + ATP = O-phospho-L-threonyl-[protein] + ADP + H(+). Has a role in pre-mRNA splicing and is essential for growth. Phosphorylates srp1. The polypeptide is Serine/threonine-protein kinase prp4 (prp4) (Schizosaccharomyces pombe (strain 972 / ATCC 24843) (Fission yeast)).